The sequence spans 387 residues: 3-ketoacyl-CoA thiolase (387 aa).

Cysteine 91 serves as the catalytic Acyl-thioester intermediate. Catalysis depends on proton acceptor residues histidine 343 and cysteine 373.

This sequence belongs to the thiolase-like superfamily. Thiolase family. In terms of assembly, heterotetramer of two alpha chains (FadB) and two beta chains (FadA).

It localises to the cytoplasm. It catalyses the reaction an acyl-CoA + acetyl-CoA = a 3-oxoacyl-CoA + CoA. Its pathway is lipid metabolism; fatty acid beta-oxidation. Its function is as follows. Catalyzes the final step of fatty acid oxidation in which acetyl-CoA is released and the CoA ester of a fatty acid two carbons shorter is formed. The polypeptide is 3-ketoacyl-CoA thiolase (Klebsiella pneumoniae subsp. pneumoniae (strain ATCC 700721 / MGH 78578)).